The following is a 154-amino-acid chain: MFRGFKEFLSRGNIVDLAVAVVIGTAFTALITKFTDSIITPLINRVGVNQQTNISPLRIDIGGDQAIDLNIVLSAAINFLLIALVVYFLVVLPYTTIRKHGEVEQFDTDLIGNQVVLLAEIRDLLAQSNGAPSGRHVDTADLTPTPNHEPRADT.

2 helical membrane passes run 12-32 (GNIV…ALIT) and 71-91 (IVLS…FLVV). A disordered region spans residues 129–154 (NGAPSGRHVDTADLTPTPNHEPRADT).

The protein belongs to the MscL family. Homopentamer.

It localises to the cell membrane. Functionally, channel that opens in response to stretch forces in the membrane lipid bilayer. May participate in the regulation of osmotic pressure changes within the cell. This chain is Large-conductance mechanosensitive channel, found in Mycobacterium leprae (strain Br4923).